The following is a 1054-amino-acid chain: CCAAT/enhancer-binding protein zeta (1054 aa).

The span at 1-20 (MAAVKEPLEFHAKRPWRPEE) shows a compositional bias: basic and acidic residues. Disordered regions lie at residues 1–42 (MAAV…GFSL) and 102–160 (VEED…PKVK). Residues 21–34 (AVEDPDEEDEDNTS) are compositionally biased toward acidic residues. Basic and acidic residues predominate over residues 109-120 (EKENSSKKEVKI). Phosphoserine is present on Ser113. Positions 124–138 (NNKNTAESQRTSVNK) are enriched in polar residues. Ser629 bears the Phosphoserine mark. Lys695 carries the post-translational modification N6-acetyllysine. Phosphoserine is present on Ser835. Disordered stretches follow at residues 873–902 (RTKG…DEVS) and 915–969 (DEDG…KKRN). Composition is skewed to acidic residues over residues 882-902 (LDED…DEVS) and 915-933 (DEDG…ESVP). Residues Ser959, Ser973, and Ser978 each carry the phosphoserine modification. The segment at 1031–1054 (IIKKKKHFKKKRIKTTQKTKKQRK) is disordered.

The protein belongs to the CBF/MAK21 family.

The protein resides in the nucleus. Its function is as follows. Stimulates transcription from the HSP70 promoter. The chain is CCAAT/enhancer-binding protein zeta (CEBPZ) from Homo sapiens (Human).